The chain runs to 292 residues: Ribosomal protein L11 methyltransferase (292 aa).

Thr145, Gly166, Asp188, and Asn229 together coordinate S-adenosyl-L-methionine.

It belongs to the methyltransferase superfamily. PrmA family.

The protein resides in the cytoplasm. It carries out the reaction L-lysyl-[protein] + 3 S-adenosyl-L-methionine = N(6),N(6),N(6)-trimethyl-L-lysyl-[protein] + 3 S-adenosyl-L-homocysteine + 3 H(+). Its function is as follows. Methylates ribosomal protein L11. This chain is Ribosomal protein L11 methyltransferase, found in Nitrosococcus oceani (strain ATCC 19707 / BCRC 17464 / JCM 30415 / NCIMB 11848 / C-107).